Reading from the N-terminus, the 179-residue chain is Translation initiation factor IF-3 (179 aa).

The protein belongs to the IF-3 family. Monomer.

The protein resides in the cytoplasm. Its function is as follows. IF-3 binds to the 30S ribosomal subunit and shifts the equilibrium between 70S ribosomes and their 50S and 30S subunits in favor of the free subunits, thus enhancing the availability of 30S subunits on which protein synthesis initiation begins. This is Translation initiation factor IF-3 from Leptospira interrogans serogroup Icterohaemorrhagiae serovar copenhageni (strain Fiocruz L1-130).